The primary structure comprises 408 residues: Serine/threonine transporter SstT (408 aa).

9 consecutive transmembrane segments (helical) span residues 19 to 39 (SLVS…VISP), 48 to 68 (LGSL…LVLV), 86 to 106 (IVGL…LLSF), 143 to 163 (VTAV…GLGF), 193 to 213 (FAPL…GFSA), 223 to 243 (VLLS…VFII), 294 to 314 (IPLG…VLTL), 322 to 342 (IEVS…SACG), and 367 to 387 (VAMQ…SAET).

The protein belongs to the dicarboxylate/amino acid:cation symporter (DAACS) (TC 2.A.23) family.

It is found in the cell inner membrane. The catalysed reaction is L-serine(in) + Na(+)(in) = L-serine(out) + Na(+)(out). The enzyme catalyses L-threonine(in) + Na(+)(in) = L-threonine(out) + Na(+)(out). Functionally, involved in the import of serine and threonine into the cell, with the concomitant import of sodium (symport system). The polypeptide is Serine/threonine transporter SstT (Colwellia psychrerythraea (strain 34H / ATCC BAA-681) (Vibrio psychroerythus)).